A 117-amino-acid polypeptide reads, in one-letter code: Ribosome-binding factor A (117 aa).

It belongs to the RbfA family. Monomer. Binds 30S ribosomal subunits, but not 50S ribosomal subunits or 70S ribosomes.

Its subcellular location is the cytoplasm. Functionally, one of several proteins that assist in the late maturation steps of the functional core of the 30S ribosomal subunit. Associates with free 30S ribosomal subunits (but not with 30S subunits that are part of 70S ribosomes or polysomes). Required for efficient processing of 16S rRNA. May interact with the 5'-terminal helix region of 16S rRNA. The chain is Ribosome-binding factor A from Streptococcus thermophilus (strain CNRZ 1066).